The chain runs to 29 residues: Toxin TdII-3 (29 aa).

The LCN-type CS-alpha/beta domain maps to Lys-1 to Leu-29.

The protein belongs to the long (4 C-C) scorpion toxin superfamily. Sodium channel inhibitor family. Beta subfamily. In terms of tissue distribution, expressed by the venom gland.

The protein resides in the secreted. Its function is as follows. Binds voltage-independently to sodium channels (Nav) and shifts the voltage of activation toward more negative potentials. This toxin is active against mammals and also affects neuromuscular preparations of frog. The sequence is that of Toxin TdII-3 from Tityus discrepans (Venezuelan scorpion).